Reading from the N-terminus, the 141-residue chain is Large ribosomal subunit protein uL11 (141 aa).

This sequence belongs to the universal ribosomal protein uL11 family. As to quaternary structure, part of the ribosomal stalk of the 50S ribosomal subunit. Interacts with L10 and the large rRNA to form the base of the stalk. L10 forms an elongated spine to which L12 dimers bind in a sequential fashion forming a multimeric L10(L12)X complex. Post-translationally, one or more lysine residues are methylated.

Its function is as follows. Forms part of the ribosomal stalk which helps the ribosome interact with GTP-bound translation factors. This is Large ribosomal subunit protein uL11 from Clostridium novyi (strain NT).